The following is a 148-amino-acid chain: uncharacterized protein (148 aa).

The ABC transmembrane type-1 domain occupies 25–148; it reads LSIGLIFSLI…YSITNIFIYN (124 aa). 3 helical membrane-spanning segments follow: residues 26–46, 60–80, and 127–147; these read SIGL…PLII, IVII…STYI, and ITRV…IFIY.

It is found in the cell membrane. This is an uncharacterized protein from Staphylococcus epidermidis.